The sequence spans 565 residues: Dihydroxy-acid dehydratase (565 aa).

Mg(2+) is bound at residue Asp-80. Position 121 (Cys-121) interacts with [2Fe-2S] cluster. Mg(2+) is bound by residues Asp-122 and Lys-123. Lys-123 carries the post-translational modification N6-carboxylysine. Residue Cys-194 coordinates [2Fe-2S] cluster. Glu-447 is a binding site for Mg(2+). The active-site Proton acceptor is Ser-473.

It belongs to the IlvD/Edd family. As to quaternary structure, homodimer. It depends on [2Fe-2S] cluster as a cofactor. Mg(2+) is required as a cofactor.

It carries out the reaction (2R)-2,3-dihydroxy-3-methylbutanoate = 3-methyl-2-oxobutanoate + H2O. The catalysed reaction is (2R,3R)-2,3-dihydroxy-3-methylpentanoate = (S)-3-methyl-2-oxopentanoate + H2O. Its pathway is amino-acid biosynthesis; L-isoleucine biosynthesis; L-isoleucine from 2-oxobutanoate: step 3/4. It participates in amino-acid biosynthesis; L-valine biosynthesis; L-valine from pyruvate: step 3/4. Functions in the biosynthesis of branched-chain amino acids. Catalyzes the dehydration of (2R,3R)-2,3-dihydroxy-3-methylpentanoate (2,3-dihydroxy-3-methylvalerate) into 2-oxo-3-methylpentanoate (2-oxo-3-methylvalerate) and of (2R)-2,3-dihydroxy-3-methylbutanoate (2,3-dihydroxyisovalerate) into 2-oxo-3-methylbutanoate (2-oxoisovalerate), the penultimate precursor to L-isoleucine and L-valine, respectively. This Chlorobium luteolum (strain DSM 273 / BCRC 81028 / 2530) (Pelodictyon luteolum) protein is Dihydroxy-acid dehydratase.